The following is a 124-amino-acid chain: Cholera enterotoxin subunit B (124 aa).

Positions 1–21 (MIKLKFGVFFTVLLSSAYAHG) are cleaved as a signal peptide. A disulfide bridge connects residues C30 and C107.

In terms of assembly, the holotoxin (choleragen) consists of a pentameric ring of B subunits whose central pore is occupied by the A subunit. The A subunit contains two chains, A1 and A2, linked by a disulfide bridge.

It is found in the secreted. Its subcellular location is the host cell membrane. In terms of biological role, the B subunit pentameric ring directs the A subunit to its target by binding to the GM1 gangliosides present on the surface of the intestinal epithelial cells. It can bind five GM1 gangliosides. It has no toxic activity by itself. This chain is Cholera enterotoxin subunit B (ctxB), found in Vibrio cholerae serotype O1 (strain ATCC 39315 / El Tor Inaba N16961).